The chain runs to 309 residues: Porphobilinogen deaminase (309 aa).

At Cys241 the chain carries S-(dipyrrolylmethanemethyl)cysteine.

This sequence belongs to the HMBS family. In terms of assembly, monomer. The cofactor is dipyrromethane.

It carries out the reaction 4 porphobilinogen + H2O = hydroxymethylbilane + 4 NH4(+). It functions in the pathway porphyrin-containing compound metabolism; protoporphyrin-IX biosynthesis; coproporphyrinogen-III from 5-aminolevulinate: step 2/4. Functionally, tetrapolymerization of the monopyrrole PBG into the hydroxymethylbilane pre-uroporphyrinogen in several discrete steps. The protein is Porphobilinogen deaminase of Bacillus thuringiensis subsp. konkukian (strain 97-27).